A 146-amino-acid polypeptide reads, in one-letter code: Hemoglobin subunit beta (146 aa).

Val1 is modified (N-acetylvaline). The 145-residue stretch at His2–His146 folds into the Globin domain. Thr12 carries the post-translational modification Phosphothreonine. At Ser44 the chain carries Phosphoserine. An N6-acetyllysine modification is found at Lys59. His63 lines the heme b pocket. Position 82 is an N6-acetyllysine (Lys82). Residue His92 participates in heme b binding. At Cys93 the chain carries S-nitrosocysteine. N6-acetyllysine is present on Lys144.

Belongs to the globin family. As to quaternary structure, heterotetramer of two alpha chains and two beta chains. In terms of tissue distribution, red blood cells.

Functionally, involved in oxygen transport from the lung to the various peripheral tissues. The sequence is that of Hemoglobin subunit beta (HBB) from Odobenus rosmarus divergens (Pacific walrus).